A 540-amino-acid chain; its full sequence is Phosphoenolpyruvate carboxykinase (ATP) (540 aa).

Position 65 (Arg65) interacts with substrate. Residue Lys87 is modified to N6-acetyllysine. Positions 207 and 213 each coordinate substrate. Residues Lys213, His232, and 248 to 256 (GLSGTGKTT) each bind ATP. Lys213 and His232 together coordinate Mn(2+). A Mn(2+)-binding site is contributed by Asp269. ATP-binding positions include Glu297, Arg333, 449 to 450 (RI), and Thr455. A substrate-binding site is contributed by Arg333. Residue Lys523 is modified to N6-acetyllysine.

The protein belongs to the phosphoenolpyruvate carboxykinase (ATP) family. In terms of assembly, monomer. The cofactor is Mn(2+).

It is found in the cytoplasm. The enzyme catalyses oxaloacetate + ATP = phosphoenolpyruvate + ADP + CO2. Its pathway is carbohydrate biosynthesis; gluconeogenesis. Its function is as follows. Involved in the gluconeogenesis. Catalyzes the conversion of oxaloacetate (OAA) to phosphoenolpyruvate (PEP) through direct phosphoryl transfer between the nucleoside triphosphate and OAA. The chain is Phosphoenolpyruvate carboxykinase (ATP) from Shigella flexneri.